Here is a 620-residue protein sequence, read N- to C-terminus: Protein CNGC15b (620 aa).

6 helical membrane-spanning segments follow: residues 73–93, 102–122, 161–181, 198–218, 237–257, and 356–376; these read IFLV…YLPI, IGIA…VFYV, GFFL…WIVI, FIII…SSQI, LMLY…LSIE, and GEIM…ALLI. 462 to 559 contributes to the a nucleoside 3',5'-cyclic phosphate binding site; that stretch reads LFDAMDERML…SSTRTVKAIS (98 aa).

This sequence belongs to the cyclic nucleotide-gated cation channel (TC 1.A.1.5) family. As to quaternary structure, interacts (via N-terminus) with DMI1 (via c-terminus). The Nod factor has no effect on this interaction, implying that the complex is maintained after activation. Expressed in roots, stems, leaves, flowers and pods.

The protein localises to the nucleus membrane. In terms of biological role, cyclic nucleotide-gated channel involved in the establishment of both rhizobial and mycorrhizal associations. Required for full activation of nuclear-localized Ca(2+) oscillations by Nod and Myc factors. Simultaneous activation of the K(+)-permeable channel DMI1 and the Ca(2+) channel CNGC15 can give rise to sustained Ca(2+) oscillations. May function during fertilization in both female and male gametophytic Ca(2+) signaling. The sequence is that of Protein CNGC15b from Medicago truncatula (Barrel medic).